We begin with the raw amino-acid sequence, 138 residues long: Putative pre-16S rRNA nuclease (138 aa).

Belongs to the YqgF nuclease family.

Its subcellular location is the cytoplasm. Its function is as follows. Could be a nuclease involved in processing of the 5'-end of pre-16S rRNA. This chain is Putative pre-16S rRNA nuclease, found in Shigella dysenteriae serotype 1 (strain Sd197).